The primary structure comprises 125 residues: DNA-directed RNA polymerase II subunit RPB9 (125 aa).

At M1 the chain carries N-acetylmethionine. 8 residues coordinate Zn(2+): C17, C20, C39, C42, C86, C89, C114, and C119. The C4-type zinc finger occupies 17-42; that stretch reads CQECNNMLYPKEDKENRILLYACRNC. The TFIIS-type zinc finger occupies 82-124; sequence EDHPCQKCGHKEAVFFQSHSARAEDAMRLYYVCTAPHCGHRWT.

It belongs to the archaeal RpoM/eukaryotic RPA12/RPB9/RPC11 RNA polymerase family. In terms of assembly, component of the RNA polymerase II (Pol II) core complex consisting of 12 subunits: a ten-subunit catalytic core composed of POLR2A/RPB1, POLR2B/RPB2, POLR2C/RPB3, POLR2I/RPB9, POLR2J/RPB11, POLR2E/RPABC1, POLR2F/RPABC2, POLR2H/RPABC3, POLR2K/RPABC4 and POLR2L/RPABC5 and a mobile stalk composed of two subunits POLR2D/RPB4 and POLR2G/RPB7, protruding from the core and functioning primarily in transcription initiation. Part of Pol II(G) complex, in which Pol II core associates with an additional subunit POLR2M; unlike conventional Pol II, Pol II(G) functions as a transcriptional repressor. Part of TBP-based Pol II pre-initiation complex (PIC), in which Pol II core assembles with general transcription factors and other specific initiation factors including GTF2E1, GTF2E2, GTF2F1, GTF2F2, TCEA1, ERCC2, ERCC3, GTF2H2, GTF2H3, GTF2H4, GTF2H5, GTF2A1, GTF2A2, GTF2B and TBP; this large multi-subunit PIC complex mediates DNA unwinding and targets Pol II core to the transcription start site where the first phosphodiester bond forms.

The protein localises to the nucleus. Its subcellular location is the nucleolus. Functionally, DNA-dependent RNA polymerase catalyzes the transcription of DNA into RNA using the four ribonucleoside triphosphates as substrates. Component of RNA polymerase II which synthesizes mRNA precursors and many functional non-coding RNAs. Pol II is the central component of the basal RNA polymerase II transcription machinery. It is composed of mobile elements that move relative to each other. POLR2I/RPB9 is part of the upper jaw surrounding the central large cleft and thought to grab the incoming DNA template. This is DNA-directed RNA polymerase II subunit RPB9 (POLR2I) from Bos taurus (Bovine).